Consider the following 545-residue polypeptide: Chaperonin GroEL (545 aa).

ATP contacts are provided by residues 30-33 (TLGP), Lys51, 87-91 (DGTTT), Gly415, and Asp495.

It belongs to the chaperonin (HSP60) family. In terms of assembly, forms a cylinder of 14 subunits composed of two heptameric rings stacked back-to-back. Interacts with the co-chaperonin GroES.

Its subcellular location is the cytoplasm. The catalysed reaction is ATP + H2O + a folded polypeptide = ADP + phosphate + an unfolded polypeptide.. Its function is as follows. Together with its co-chaperonin GroES, plays an essential role in assisting protein folding. The GroEL-GroES system forms a nano-cage that allows encapsulation of the non-native substrate proteins and provides a physical environment optimized to promote and accelerate protein folding. The polypeptide is Chaperonin GroEL (Yersinia pestis bv. Antiqua (strain Antiqua)).